The sequence spans 304 residues: N-acetyl-D-glucosamine kinase (304 aa).

Residues 4–11 (GFDMGGTK) and 133–140 (GVGGGLIV) contribute to the ATP site. Zn(2+) is bound by residues His-157, Cys-177, Cys-179, and Cys-184.

Belongs to the ROK (NagC/XylR) family. NagK subfamily.

The catalysed reaction is N-acetyl-D-glucosamine + ATP = N-acetyl-D-glucosamine 6-phosphate + ADP + H(+). Its pathway is cell wall biogenesis; peptidoglycan recycling. Functionally, catalyzes the phosphorylation of N-acetyl-D-glucosamine (GlcNAc) derived from cell-wall degradation, yielding GlcNAc-6-P. The polypeptide is N-acetyl-D-glucosamine kinase (Yersinia pseudotuberculosis serotype O:3 (strain YPIII)).